We begin with the raw amino-acid sequence, 159 residues long: Antitoxin Xre (159 aa).

The protein belongs to the MbcA/ParS/Xre antitoxin family. In terms of assembly, homodimer. Forms a complex with cognate toxin Res; the 2 toxin molecules dimerize and each contacts an Xre homodimer. Most Res-Xre contacts are between the antitoxin molecule closest to the toxin.

Probable antitoxin component of a type II toxin-antitoxin (TA) system. In vivo probably neutralizes the toxic effect of cognate toxin Res. This chain is Antitoxin Xre, found in Pseudomonas putida (strain ATCC 47054 / DSM 6125 / CFBP 8728 / NCIMB 11950 / KT2440).